The following is a 158-amino-acid chain: Ribosome maturation factor RimP (158 aa).

It belongs to the RimP family.

It is found in the cytoplasm. In terms of biological role, required for maturation of 30S ribosomal subunits. This Lactobacillus gasseri (strain ATCC 33323 / DSM 20243 / BCRC 14619 / CIP 102991 / JCM 1131 / KCTC 3163 / NCIMB 11718 / NCTC 13722 / AM63) protein is Ribosome maturation factor RimP.